The chain runs to 478 residues: Putative response regulator NtrX-like (478 aa).

A Response regulatory domain is found at 5 to 121 (DVLIVDDEED…KLVILLKRAC (117 aa)). Aspartate 54 carries the post-translational modification 4-aspartylphosphate. The Sigma-54 factor interaction domain maps to 143–372 (LVGNSTITLK…LRNVVEWTLI (230 aa)). Residues 171–178 (GKVGSGKE) and 235–244 (ANNGTLYIDE) contribute to the ATP site.

Member of the two-component regulatory system RBE_0312/RBE_0470. This Rickettsia bellii (strain RML369-C) protein is Putative response regulator NtrX-like.